The chain runs to 615 residues: MNEPNRNFFWIFFLILGIFWLQSVWFGSRTVQQIPYSQYESLVKQGDVQNLIVTENHIRGEFKQPQNGFKSFVTNRVEPELAKELSGAGVTYRREIENTFFRDLLSWVVPALIFVAVFLYFSRKFAEKGGMSGLMSVGKSGARLYAETGVKVSFGDVAGVEEAKAELYEVVQFLKSPQEFGRLGARMPKGILLVGPPGTGKTLLAKAVAGEAQVPFYSITGSEFVEMFVGVGAARVRDLFEQARKNAPCIIFIDELDALGKVRGVAGSFGGHDEKEQTLNQLLAELDGFDSRSGVVILAATNRPEVLDPALLRAGRFDRQVLVDRPDRTGREQILRVHLKKIKADEALNVEHLAHLTSGFTGADIANLINEAAMVATRRKAETVNEKDFVAAIERIVAGLEKKSRLLNEKEKAIVAHHEMGHAIMACLFPGVDKVQKISIIPRGLGALGYTMQRPTEDRYLMTRPELLDKICVLLGGRVAEELIFGEVSTGASDDLVRVTNIAEALVTRYGMSEVLGNIVFEQPTGNFLEVPGAGYRSRTYSEKSATEIDQEIRQIVAACALRTRESLAANLSILKKGAAQLLEKETLSEPEIELLMRDLVVKNAAPQRERDLSV.

The Cytoplasmic portion of the chain corresponds to 1–7 (MNEPNRN). A helical membrane pass occupies residues 8 to 28 (FFWIFFLILGIFWLQSVWFGS). At 29 to 99 (RTVQQIPYSQ…VTYRREIENT (71 aa)) the chain is on the periplasmic side. The chain crosses the membrane as a helical span at residues 100–120 (FFRDLLSWVVPALIFVAVFLY). Topologically, residues 121–615 (FSRKFAEKGG…APQRERDLSV (495 aa)) are cytoplasmic. 195–202 (GPPGTGKT) is an ATP binding site. A Zn(2+)-binding site is contributed by His-418. Residue Glu-419 is part of the active site. Residues His-422 and Asp-495 each contribute to the Zn(2+) site.

The protein in the central section; belongs to the AAA ATPase family. It in the C-terminal section; belongs to the peptidase M41 family. In terms of assembly, homohexamer. Zn(2+) serves as cofactor.

It is found in the cell inner membrane. Functionally, acts as a processive, ATP-dependent zinc metallopeptidase for both cytoplasmic and membrane proteins. Plays a role in the quality control of integral membrane proteins. The chain is ATP-dependent zinc metalloprotease FtsH 2 from Bdellovibrio bacteriovorus (strain ATCC 15356 / DSM 50701 / NCIMB 9529 / HD100).